The primary structure comprises 458 residues: Bifunctional protein GlmU (458 aa).

Positions 1-224 (MTVIALAAGK…PKVAVGVNNQ (224 aa)) are pyrophosphorylase. UDP-N-acetyl-alpha-D-glucosamine contacts are provided by residues 6-9 (LAAG), Lys20, Gln71, and 76-77 (GT). Asp99 provides a ligand contact to Mg(2+). 4 residues coordinate UDP-N-acetyl-alpha-D-glucosamine: Gly136, Glu150, Asn165, and Asn222. Asn222 is a binding site for Mg(2+). The interval 225-245 (LELARATRLLFKRKALRLMED) is linker. The segment at 246–458 (GVLMIDPRTV…TAETEEKEQV (213 aa)) is N-acetyltransferase. UDP-N-acetyl-alpha-D-glucosamine contacts are provided by Arg328 and Lys346. Catalysis depends on His358, which acts as the Proton acceptor. UDP-N-acetyl-alpha-D-glucosamine contacts are provided by Tyr361 and Asn372. Acetyl-CoA-binding positions include 381–382 (NY), Ser401, Ser419, and Arg436.

In the N-terminal section; belongs to the N-acetylglucosamine-1-phosphate uridyltransferase family. It in the C-terminal section; belongs to the transferase hexapeptide repeat family. As to quaternary structure, homotrimer. Mg(2+) serves as cofactor.

The protein resides in the cytoplasm. It carries out the reaction alpha-D-glucosamine 1-phosphate + acetyl-CoA = N-acetyl-alpha-D-glucosamine 1-phosphate + CoA + H(+). The catalysed reaction is N-acetyl-alpha-D-glucosamine 1-phosphate + UTP + H(+) = UDP-N-acetyl-alpha-D-glucosamine + diphosphate. The protein operates within nucleotide-sugar biosynthesis; UDP-N-acetyl-alpha-D-glucosamine biosynthesis; N-acetyl-alpha-D-glucosamine 1-phosphate from alpha-D-glucosamine 6-phosphate (route II): step 2/2. Its pathway is nucleotide-sugar biosynthesis; UDP-N-acetyl-alpha-D-glucosamine biosynthesis; UDP-N-acetyl-alpha-D-glucosamine from N-acetyl-alpha-D-glucosamine 1-phosphate: step 1/1. It participates in bacterial outer membrane biogenesis; LPS lipid A biosynthesis. Functionally, catalyzes the last two sequential reactions in the de novo biosynthetic pathway for UDP-N-acetylglucosamine (UDP-GlcNAc). The C-terminal domain catalyzes the transfer of acetyl group from acetyl coenzyme A to glucosamine-1-phosphate (GlcN-1-P) to produce N-acetylglucosamine-1-phosphate (GlcNAc-1-P), which is converted into UDP-GlcNAc by the transfer of uridine 5-monophosphate (from uridine 5-triphosphate), a reaction catalyzed by the N-terminal domain. The chain is Bifunctional protein GlmU from Bdellovibrio bacteriovorus (strain ATCC 15356 / DSM 50701 / NCIMB 9529 / HD100).